Here is a 358-residue protein sequence, read N- to C-terminus: WAT1-related protein At3g28080 (358 aa).

The next 10 helical transmembrane spans lie at 12 to 32 (AVFL…STLF), 42 to 62 (IYPF…PSLF), 81 to 101 (IGLL…GIEY), 105 to 125 (TLAS…AVIF), 137 to 157 (SVAK…VIFY), 187 to 207 (WLIG…SFIL), 219 to 239 (FTVS…IGLV), 245 to 265 (PSIW…TGII), 283 to 303 (LYLA…GTIF), and 308 to 328 (LYLG…VVMW). One can recognise an EamA domain in the interval 27-155 (GLSTLFKVAT…LSLIGAFVVI (129 aa)).

Belongs to the drug/metabolite transporter (DMT) superfamily. Plant drug/metabolite exporter (P-DME) (TC 2.A.7.4) family.

It is found in the membrane. This chain is WAT1-related protein At3g28080, found in Arabidopsis thaliana (Mouse-ear cress).